Reading from the N-terminus, the 393-residue chain is NADH-quinone oxidoreductase subunit D (393 aa).

Belongs to the complex I 49 kDa subunit family. As to quaternary structure, NDH-1 is composed of 14 different subunits. Subunits NuoB, C, D, E, F, and G constitute the peripheral sector of the complex.

The protein resides in the cell inner membrane. The catalysed reaction is a quinone + NADH + 5 H(+)(in) = a quinol + NAD(+) + 4 H(+)(out). Functionally, NDH-1 shuttles electrons from NADH, via FMN and iron-sulfur (Fe-S) centers, to quinones in the respiratory chain. The immediate electron acceptor for the enzyme in this species is believed to be ubiquinone. Couples the redox reaction to proton translocation (for every two electrons transferred, four hydrogen ions are translocated across the cytoplasmic membrane), and thus conserves the redox energy in a proton gradient. This is NADH-quinone oxidoreductase subunit D from Ehrlichia canis (strain Jake).